A 284-amino-acid chain; its full sequence is Pantothenate synthetase (284 aa).

Residue 30 to 37 (MGNLHDGH) coordinates ATP. The active-site Proton donor is His37. Residue Gln61 participates in (R)-pantoate binding. Gln61 provides a ligand contact to beta-alanine. 149–152 (GEKD) contributes to the ATP binding site. Residue Gln155 participates in (R)-pantoate binding. ATP-binding positions include Val178 and 186-189 (LSSR).

It belongs to the pantothenate synthetase family. In terms of assembly, homodimer.

Its subcellular location is the cytoplasm. The enzyme catalyses (R)-pantoate + beta-alanine + ATP = (R)-pantothenate + AMP + diphosphate + H(+). It functions in the pathway cofactor biosynthesis; (R)-pantothenate biosynthesis; (R)-pantothenate from (R)-pantoate and beta-alanine: step 1/1. Its function is as follows. Catalyzes the condensation of pantoate with beta-alanine in an ATP-dependent reaction via a pantoyl-adenylate intermediate. The polypeptide is Pantothenate synthetase (Klebsiella pneumoniae subsp. pneumoniae (strain ATCC 700721 / MGH 78578)).